We begin with the raw amino-acid sequence, 482 residues long: MSPTTAANQAKKLIKVPEMRRIKHIHFVGIGGAGMCGIAEVLANQGYKISGSDIKASKTTQQLEENGIKVYIGHEAENIKNANVLVVSTAIDPENPEVKAAIEQRIPIVRRAEMLGELMRYRHGIAVAGTHGKTTTTSLLTTMLAEENLDPTYVIGGLLNSTGVNAALGESRFIVAEADESDASFLYLQPMAAIVTNIDADHMDTYEGSFDKLKDTFVQFLHNLPFYGLAVVCGDDANIREILPRVGRPVITYGFNEDNDIRAIDVEQDGMRSHFTVLRKGREPLRLTINQPGLHNVLNALAAIGVATDEGVSDEAISRALKGFSGVGRRFQVQGEFELGEGNVKLVDDYGHHPKEVEATIKAARQSHPDRRLVMLFQPHRYSRTRDCFDDFIEVLSQVDQLLLLEVYPAGEKPIVGADSRTLARSIRLRGQVEPILIDPVEGNLQNIMQNVLQPNDLLLTQGAGNVGAISVELAQHHLYVK.

129–135 (GTHGKTT) lines the ATP pocket.

This sequence belongs to the MurCDEF family.

The protein resides in the cytoplasm. It carries out the reaction UDP-N-acetyl-alpha-D-muramate + L-alanine + ATP = UDP-N-acetyl-alpha-D-muramoyl-L-alanine + ADP + phosphate + H(+). It functions in the pathway cell wall biogenesis; peptidoglycan biosynthesis. Functionally, cell wall formation. The sequence is that of UDP-N-acetylmuramate--L-alanine ligase from Acinetobacter baumannii (strain AB307-0294).